The primary structure comprises 269 residues: Acyl-CoA-binding domain-containing protein 4 (269 aa).

The 90-residue stretch at C12–D101 folds into the ACB domain. Residues I23–Y32, Y43–K47, K69, and Y88 contribute to the an acyl-CoA site. 3 disordered regions span residues G150–L175, E195–A226, and V248–N269. The span at P156–P167 shows a compositional bias: pro residues. Phosphoserine is present on residues S166 and S171.

In terms of biological role, binds medium- and long-chain acyl-CoA esters and may function as an intracellular carrier of acyl-CoA esters. In Pongo abelii (Sumatran orangutan), this protein is Acyl-CoA-binding domain-containing protein 4 (ACBD4).